The sequence spans 158 residues: Transcription elongation factor GreA (158 aa).

It belongs to the GreA/GreB family.

In terms of biological role, necessary for efficient RNA polymerase transcription elongation past template-encoded arresting sites. The arresting sites in DNA have the property of trapping a certain fraction of elongating RNA polymerases that pass through, resulting in locked ternary complexes. Cleavage of the nascent transcript by cleavage factors such as GreA or GreB allows the resumption of elongation from the new 3'terminus. GreA releases sequences of 2 to 3 nucleotides. The chain is Transcription elongation factor GreA from Acinetobacter baumannii (strain SDF).